A 262-amino-acid chain; its full sequence is Autophagy-related protein 27 (262 aa).

The first 20 residues, 1 to 20 (MLKMRLLLTWVLLVLPLVNA), serve as a signal peptide directing secretion. In terms of domain architecture, MRH spans 21–170 (LKCANNRVLR…IIKGPSGCKK (150 aa)). Topologically, residues 21 to 185 (LKCANNRVLR…EDGDVEESSG (165 aa)) are lumenal. Intrachain disulfides connect Cys-23/Cys-61, Cys-73/Cys-80, and Cys-139/Cys-168. A helical membrane pass occupies residues 186 to 206 (LSWFTWLFIYAIFFTVVYLVV). Residues 207-262 (TSYTQTRGGSIDDFRHDFVERAKQFFTSLPAFVREVVSKVLGSAPNAAERGGYSAV) lie on the Cytoplasmic side of the membrane.

Belongs to the ATG27 family.

The protein localises to the cytoplasmic vesicle membrane. It localises to the golgi apparatus membrane. It is found in the mitochondrion membrane. Regulates the cytoplasm to vacuole transport (Cvt) vesicle formation. The sequence is that of Autophagy-related protein 27 (ATG27) from Vanderwaltozyma polyspora (strain ATCC 22028 / DSM 70294 / BCRC 21397 / CBS 2163 / NBRC 10782 / NRRL Y-8283 / UCD 57-17) (Kluyveromyces polysporus).